The chain runs to 570 residues: Formate--tetrahydrofolate ligase (570 aa).

Position 65–72 (65–72) interacts with ATP; it reads TPLGEGKT.

This sequence belongs to the formate--tetrahydrofolate ligase family.

It catalyses the reaction (6S)-5,6,7,8-tetrahydrofolate + formate + ATP = (6R)-10-formyltetrahydrofolate + ADP + phosphate. It functions in the pathway one-carbon metabolism; tetrahydrofolate interconversion. This chain is Formate--tetrahydrofolate ligase, found in Herpetosiphon aurantiacus (strain ATCC 23779 / DSM 785 / 114-95).